The chain runs to 293 residues: Ribosomal RNA small subunit methyltransferase A (293 aa).

Asn29, Leu31, Gly56, Glu77, Asp102, and Asn127 together coordinate S-adenosyl-L-methionine.

The protein belongs to the class I-like SAM-binding methyltransferase superfamily. rRNA adenine N(6)-methyltransferase family. RsmA subfamily.

The protein resides in the cytoplasm. The enzyme catalyses adenosine(1518)/adenosine(1519) in 16S rRNA + 4 S-adenosyl-L-methionine = N(6)-dimethyladenosine(1518)/N(6)-dimethyladenosine(1519) in 16S rRNA + 4 S-adenosyl-L-homocysteine + 4 H(+). Its function is as follows. Specifically dimethylates two adjacent adenosines (A1518 and A1519) in the loop of a conserved hairpin near the 3'-end of 16S rRNA in the 30S particle. May play a critical role in biogenesis of 30S subunits. The chain is Ribosomal RNA small subunit methyltransferase A from Lysinibacillus sphaericus (strain C3-41).